The chain runs to 374 residues: uncharacterized protein (374 aa).

The span at 86–104 (RPAATAGTTPATGASGSAR) shows a compositional bias: low complexity. The tract at residues 86–109 (RPAATAGTTPATGASGSARPTDAA) is disordered. The Macro domain occupies 179-354 (WWRRSNTTRG…LQRVVFAVHG (176 aa)).

This is an uncharacterized protein from Mycobacterium tuberculosis (strain CDC 1551 / Oshkosh).